The following is a 104-amino-acid chain: NADH-quinone oxidoreductase subunit K (104 aa).

The next 3 helical transmembrane spans lie at 4 to 24, 31 to 51, and 67 to 87; these read VPAS…LFGA, VIVL…LVAF, and LFTM…LIAL.

The protein belongs to the complex I subunit 4L family. NDH-1 is composed of 14 different subunits. Subunits NuoA, H, J, K, L, M, N constitute the membrane sector of the complex.

Its subcellular location is the cell membrane. It catalyses the reaction a quinone + NADH + 5 H(+)(in) = a quinol + NAD(+) + 4 H(+)(out). Functionally, NDH-1 shuttles electrons from NADH, via FMN and iron-sulfur (Fe-S) centers, to quinones in the respiratory chain. The immediate electron acceptor for the enzyme in this species is believed to be a menaquinone. Couples the redox reaction to proton translocation (for every two electrons transferred, four hydrogen ions are translocated across the cytoplasmic membrane), and thus conserves the redox energy in a proton gradient. The sequence is that of NADH-quinone oxidoreductase subunit K from Bacillus cereus (strain G9842).